Here is a 433-residue protein sequence, read N- to C-terminus: 5-methylthioadenosine/S-adenosylhomocysteine deaminase (433 aa).

Histidine 67 and histidine 69 together coordinate Zn(2+). Substrate is bound by residues glutamate 96, arginine 148, and histidine 186. Histidine 213 contacts Zn(2+). Residues glutamate 216 and aspartate 301 each coordinate substrate. Aspartate 301 is a binding site for Zn(2+).

This sequence belongs to the metallo-dependent hydrolases superfamily. MTA/SAH deaminase family. Zn(2+) is required as a cofactor.

It catalyses the reaction S-adenosyl-L-homocysteine + H2O + H(+) = S-inosyl-L-homocysteine + NH4(+). The enzyme catalyses S-methyl-5'-thioadenosine + H2O + H(+) = S-methyl-5'-thioinosine + NH4(+). Its function is as follows. Catalyzes the deamination of 5-methylthioadenosine and S-adenosyl-L-homocysteine into 5-methylthioinosine and S-inosyl-L-homocysteine, respectively. Is also able to deaminate adenosine. In Desulforamulus reducens (strain ATCC BAA-1160 / DSM 100696 / MI-1) (Desulfotomaculum reducens), this protein is 5-methylthioadenosine/S-adenosylhomocysteine deaminase.